The chain runs to 197 residues: A-type ATP synthase subunit E (197 aa).

Belongs to the V-ATPase E subunit family. Has multiple subunits with at least A(3), B(3), C, D, E, F, H, I and proteolipid K(x).

Its subcellular location is the cell membrane. Component of the A-type ATP synthase that produces ATP from ADP in the presence of a proton gradient across the membrane. This Thermococcus gammatolerans (strain DSM 15229 / JCM 11827 / EJ3) protein is A-type ATP synthase subunit E.